A 265-amino-acid polypeptide reads, in one-letter code: Small ribosomal subunit protein uS3 (265 aa).

A KH type-2 domain is found at 39 to 107 (VREFLKKKLK…PVHVNIEEIR (69 aa)). The interval 211–265 (NDAPVVEEPQEDRRRRPGRPEGRRREGEGRPAGNRRGGAGAGRRAAPGADAKSGE) is disordered. The segment covering 221 to 239 (EDRRRRPGRPEGRRREGEG) has biased composition (basic and acidic residues).

Belongs to the universal ribosomal protein uS3 family. As to quaternary structure, part of the 30S ribosomal subunit. Forms a tight complex with proteins S10 and S14.

Binds the lower part of the 30S subunit head. Binds mRNA in the 70S ribosome, positioning it for translation. This chain is Small ribosomal subunit protein uS3, found in Cupriavidus metallidurans (strain ATCC 43123 / DSM 2839 / NBRC 102507 / CH34) (Ralstonia metallidurans).